The sequence spans 261 residues: Thioesterase TesA (261 aa).

The disordered stretch occupies residues 1–24; it reads MLARHGPRYGGSVNGHSDDSSGDA. Catalysis depends on residues S104, D208, and H236.

It belongs to the thioesterase family.

The enzyme catalyses a fatty acyl-CoA + H2O = a fatty acid + CoA + H(+). In terms of biological role, involved in the synthesis of both phthiocerol dimycocerosates (PDIMs) and phenolic glycolipids (PGLs), which are structurally related lipids non-covalently bound to the outer cell wall layer of M.tuberculosis and are important virulence factors. The chain is Thioesterase TesA (tesA) from Mycobacterium bovis (strain ATCC BAA-935 / AF2122/97).